Here is a 70-residue protein sequence, read N- to C-terminus: Conotoxin Ep11.12 (70 aa).

An N-terminal signal peptide occupies residues 1–26 (MMFRVTSVGCFLLVILSLNLVVLTNA). 4 cysteine pairs are disulfide-bonded: Cys-27-Cys-41, Cys-34-Cys-46, Cys-40-Cys-50, and Cys-45-Cys-54. Pro-57 carries the post-translational modification Proline amide. Residues 61–70 (AKLREFFRQR) constitute a propeptide that is removed on maturation.

It belongs to the conotoxin I2 superfamily. Expressed by the venom duct.

It localises to the secreted. The polypeptide is Conotoxin Ep11.12 (Conus episcopatus (Bishop's cone)).